Consider the following 471-residue polypeptide: ATP synthase subunit beta (471 aa).

An ATP-binding site is contributed by 159 to 166 (GGAGVGKT).

This sequence belongs to the ATPase alpha/beta chains family. In terms of assembly, F-type ATPases have 2 components, CF(1) - the catalytic core - and CF(0) - the membrane proton channel. CF(1) has five subunits: alpha(3), beta(3), gamma(1), delta(1), epsilon(1). CF(0) has four main subunits: a(1), b(1), b'(1) and c(9-12).

The protein resides in the cell membrane. It carries out the reaction ATP + H2O + 4 H(+)(in) = ADP + phosphate + 5 H(+)(out). Functionally, produces ATP from ADP in the presence of a proton gradient across the membrane. The catalytic sites are hosted primarily by the beta subunits. The sequence is that of ATP synthase subunit beta from Heliobacterium modesticaldum (strain ATCC 51547 / Ice1).